A 603-amino-acid chain; its full sequence is Protein SHORT-ROOT 2 (603 aa).

2 disordered regions span residues 11 to 58 (HHHH…HSHS) and 106 to 140 (DFSS…SSAG). Over residues 31–44 (SYPSSRGSTSSPSS) the composition is skewed to low complexity. A compositionally biased stretch (basic residues) spans 45 to 58 (HHTHNHTYYHHSHS). Residues 108-125 (SSSSSSRQFHSGTGAPSS) show a composition bias toward low complexity. A GRAS domain is found at 179–602 (AAPSSSGRWA…QPVVWASAWK (424 aa)). Residues 186 to 249 (RWAAQLLMEC…LTTSGPRTLR (64 aa)) form a leucine repeat I (LRI) region. The interval 268–354 (ALKFQELSPW…DTPHLSITTV (87 aa)) is VHIID. The VHIID signature appears at 318-322 (LHILD). The segment at 370–406 (EIGQRLEKFARLMGVPFSFRAVHHAGDLADLDLAALD) is leucine repeat II (LRII). Positions 416-514 (LAVNCVNALR…ERAVGRAIVD (99 aa)) are PFYRE. The segment at 517 to 602 (SCPASQSAER…QPVVWASAWK (86 aa)) is SAW.

Belongs to the GRAS family. In terms of assembly, does not interact with SCR1.

The protein resides in the nucleus. Putative transcription factor involved in asymmetric cell division. The protein is Protein SHORT-ROOT 2 (SHR2) of Oryza sativa subsp. indica (Rice).